We begin with the raw amino-acid sequence, 296 residues long: Tubulin polyglutamylase complex subunit 2 (296 aa).

Basic residues predominate over residues 254-265 (SKNKILIPKKKG). The interval 254-296 (SKNKILIPKKKGPVPPASGQKGPGPLPPPTSKPTTGSGNPVRK) is disordered. Residues 285-296 (KPTTGSGNPVRK) show a composition bias toward low complexity.

In terms of assembly, part of the neuronal tubulin polyglutamylase complex which contains TPGS1, TPGS2, TTLL1, LRRC49 and NICN1. Interacts with CSTPP1 and LRRC49.

The protein localises to the cytoplasm. Its subcellular location is the cytoskeleton. It localises to the microtubule organizing center. It is found in the centrosome. The protein resides in the centriolar satellite. Subunit of the tubulin polyglutamylase complex (TPGC). The complex mediates cilia and flagella polyglutamylation which is essential for their biogenesis and motility. The polypeptide is Tubulin polyglutamylase complex subunit 2 (Tpgs2) (Mus musculus (Mouse)).